A 388-amino-acid polypeptide reads, in one-letter code: Chorismate synthase (388 aa).

NADP(+)-binding residues include arginine 39 and arginine 45. FMN is bound by residues 130–132 (RSS), 251–252 (NA), glycine 296, 311–315 (KPIPT), and arginine 337.

Belongs to the chorismate synthase family. As to quaternary structure, homotetramer. It depends on FMNH2 as a cofactor.

The enzyme catalyses 5-O-(1-carboxyvinyl)-3-phosphoshikimate = chorismate + phosphate. The protein operates within metabolic intermediate biosynthesis; chorismate biosynthesis; chorismate from D-erythrose 4-phosphate and phosphoenolpyruvate: step 7/7. Functionally, catalyzes the anti-1,4-elimination of the C-3 phosphate and the C-6 proR hydrogen from 5-enolpyruvylshikimate-3-phosphate (EPSP) to yield chorismate, which is the branch point compound that serves as the starting substrate for the three terminal pathways of aromatic amino acid biosynthesis. This reaction introduces a second double bond into the aromatic ring system. The sequence is that of Chorismate synthase from Lactococcus lactis subsp. lactis (strain IL1403) (Streptococcus lactis).